We begin with the raw amino-acid sequence, 64 residues long: Large ribosomal subunit protein bL35 (64 aa).

The segment covering 1–22 (MPKMKSHTGMGKRVRVTGKGKI) has biased composition (basic residues). The tract at residues 1-39 (MPKMKSHTGMGKRVRVTGKGKIVKQQAGLRHNLEKKPST) is disordered.

This sequence belongs to the bacterial ribosomal protein bL35 family.

The sequence is that of Large ribosomal subunit protein bL35 from Salinispora arenicola (strain CNS-205).